Consider the following 271-residue polypeptide: Phosphatidylglycerol--prolipoprotein diacylglyceryl transferase (271 aa).

7 consecutive transmembrane segments (helical) span residues 25–45 (WYGI…KFFV), 60–80 (YFIW…ILIY), 103–123 (FVGI…IATL), 134–154 (WIFL…GRIG), 181–201 (PSQL…VYLA), 209–229 (GELI…CEFY), and 235–255 (GIGF…IMFI). Arg152 is a binding site for a 1,2-diacyl-sn-glycero-3-phospho-(1'-sn-glycerol).

The protein belongs to the Lgt family.

The protein resides in the cell inner membrane. It catalyses the reaction L-cysteinyl-[prolipoprotein] + a 1,2-diacyl-sn-glycero-3-phospho-(1'-sn-glycerol) = an S-1,2-diacyl-sn-glyceryl-L-cysteinyl-[prolipoprotein] + sn-glycerol 1-phosphate + H(+). It participates in protein modification; lipoprotein biosynthesis (diacylglyceryl transfer). Functionally, catalyzes the transfer of the diacylglyceryl group from phosphatidylglycerol to the sulfhydryl group of the N-terminal cysteine of a prolipoprotein, the first step in the formation of mature lipoproteins. This chain is Phosphatidylglycerol--prolipoprotein diacylglyceryl transferase, found in Campylobacter jejuni subsp. jejuni serotype O:6 (strain 81116 / NCTC 11828).